Consider the following 321-residue polypeptide: Transaldolase (321 aa).

Lysine 132 serves as the catalytic Schiff-base intermediate with substrate.

It belongs to the transaldolase family. Type 1 subfamily. As to quaternary structure, homodimer.

It is found in the cytoplasm. The enzyme catalyses D-sedoheptulose 7-phosphate + D-glyceraldehyde 3-phosphate = D-erythrose 4-phosphate + beta-D-fructose 6-phosphate. Its pathway is carbohydrate degradation; pentose phosphate pathway; D-glyceraldehyde 3-phosphate and beta-D-fructose 6-phosphate from D-ribose 5-phosphate and D-xylulose 5-phosphate (non-oxidative stage): step 2/3. Functionally, transaldolase is important for the balance of metabolites in the pentose-phosphate pathway. The polypeptide is Transaldolase (Rhizobium leguminosarum bv. trifolii (strain WSM2304)).